Reading from the N-terminus, the 208-residue chain is Sec-independent protein translocase protein TatB (208 aa).

The helical transmembrane segment at 1-21 threads the bilayer; the sequence is MFDIGVGELTLIAVVALVVLG. Positions 188–208 are disordered; that stretch reads DAGTPAASMPSAPAKIQEKQP.

It belongs to the TatB family. The Tat system comprises two distinct complexes: a TatABC complex, containing multiple copies of TatA, TatB and TatC subunits, and a separate TatA complex, containing only TatA subunits. Substrates initially bind to the TatABC complex, which probably triggers association of the separate TatA complex to form the active translocon.

Its subcellular location is the cell inner membrane. Functionally, part of the twin-arginine translocation (Tat) system that transports large folded proteins containing a characteristic twin-arginine motif in their signal peptide across membranes. Together with TatC, TatB is part of a receptor directly interacting with Tat signal peptides. TatB may form an oligomeric binding site that transiently accommodates folded Tat precursor proteins before their translocation. This chain is Sec-independent protein translocase protein TatB, found in Xanthomonas axonopodis pv. citri (strain 306).